The following is a 961-amino-acid chain: Integrator complex subunit 7 (961 aa).

Residues 937-955 (QVRLQQQQGQPPSQQQQQR) show a composition bias toward low complexity. The tract at residues 937–961 (QVRLQQQQGQPPSQQQQQRTAYSRF) is disordered.

This sequence belongs to the Integrator subunit 7 family. In terms of assembly, component of the Integrator complex, composed of core subunits INTS1, INTS2, INTS3, INTS4, INTS5, INTS6, INTS7, INTS8, INTS9/RC74, INTS10, INTS11/CPSF3L, INTS12, INTS13, INTS14 and INTS15. The core complex associates with protein phosphatase 2A subunits PPP2CA and PPP2R1A, to form the Integrator-PP2A (INTAC) complex.

Its subcellular location is the nucleus. It localises to the chromosome. It is found in the cytoplasm. Functionally, component of the integrator complex, a multiprotein complex that terminates RNA polymerase II (Pol II) transcription in the promoter-proximal region of genes. The integrator complex provides a quality checkpoint during transcription elongation by driving premature transcription termination of transcripts that are unfavorably configured for transcriptional elongation: the complex terminates transcription by (1) catalyzing dephosphorylation of the C-terminal domain (CTD) of Pol II subunit POLR2A/RPB1 and SUPT5H/SPT5, (2) degrading the exiting nascent RNA transcript via endonuclease activity and (3) promoting the release of Pol II from bound DNA. The integrator complex is also involved in terminating the synthesis of non-coding Pol II transcripts, such as enhancer RNAs (eRNAs), small nuclear RNAs (snRNAs), telomerase RNAs and long non-coding RNAs (lncRNAs). This Gallus gallus (Chicken) protein is Integrator complex subunit 7 (INTS7).